Here is a 514-residue protein sequence, read N- to C-terminus: Histidine ammonia-lyase (514 aa).

A cross-link (5-imidazolinone (Ala-Gly)) is located at residues 143–145 (ASG). The residue at position 144 (serine 144) is a 2,3-didehydroalanine (Ser).

The protein belongs to the PAL/histidase family. Contains an active site 4-methylidene-imidazol-5-one (MIO), which is formed autocatalytically by cyclization and dehydration of residues Ala-Ser-Gly.

It localises to the cytoplasm. The enzyme catalyses L-histidine = trans-urocanate + NH4(+). It functions in the pathway amino-acid degradation; L-histidine degradation into L-glutamate; N-formimidoyl-L-glutamate from L-histidine: step 1/3. This Photorhabdus laumondii subsp. laumondii (strain DSM 15139 / CIP 105565 / TT01) (Photorhabdus luminescens subsp. laumondii) protein is Histidine ammonia-lyase.